Here is a 415-residue protein sequence, read N- to C-terminus: Serine hydroxymethyltransferase (415 aa).

Residues Leu122 and 126–128 (GHL) each bind (6S)-5,6,7,8-tetrahydrofolate. N6-(pyridoxal phosphate)lysine is present on Lys230.

It belongs to the SHMT family. Homodimer. The cofactor is pyridoxal 5'-phosphate.

It localises to the cytoplasm. It carries out the reaction (6R)-5,10-methylene-5,6,7,8-tetrahydrofolate + glycine + H2O = (6S)-5,6,7,8-tetrahydrofolate + L-serine. It functions in the pathway one-carbon metabolism; tetrahydrofolate interconversion. Its pathway is amino-acid biosynthesis; glycine biosynthesis; glycine from L-serine: step 1/1. In terms of biological role, catalyzes the reversible interconversion of serine and glycine with tetrahydrofolate (THF) serving as the one-carbon carrier. This reaction serves as the major source of one-carbon groups required for the biosynthesis of purines, thymidylate, methionine, and other important biomolecules. Also exhibits THF-independent aldolase activity toward beta-hydroxyamino acids, producing glycine and aldehydes, via a retro-aldol mechanism. This is Serine hydroxymethyltransferase from Cupriavidus necator (strain ATCC 17699 / DSM 428 / KCTC 22496 / NCIMB 10442 / H16 / Stanier 337) (Ralstonia eutropha).